A 282-amino-acid chain; its full sequence is Nucleotide-binding protein PXO_02223 (282 aa).

Position 5–12 (5–12 (GLSGSGKS)) interacts with ATP. 57 to 60 (DVRS) contacts GTP.

This sequence belongs to the RapZ-like family.

Its function is as follows. Displays ATPase and GTPase activities. The sequence is that of Nucleotide-binding protein PXO_02223 from Xanthomonas oryzae pv. oryzae (strain PXO99A).